The primary structure comprises 593 residues: UvrABC system protein C (593 aa).

The region spanning 14–91 is the GIY-YIG domain; it reads DSPGCYLHKD…IQENMPKYNI (78 aa). The UVR domain maps to 196 to 231; that stretch reads NKIVNGLTEKMKSAAMTMEFERAAEYRDLIEAISLL.

The protein belongs to the UvrC family. As to quaternary structure, interacts with UvrB in an incision complex.

The protein localises to the cytoplasm. Its function is as follows. The UvrABC repair system catalyzes the recognition and processing of DNA lesions. UvrC both incises the 5' and 3' sides of the lesion. The N-terminal half is responsible for the 3' incision and the C-terminal half is responsible for the 5' incision. In Streptococcus agalactiae serotype Ia (strain ATCC 27591 / A909 / CDC SS700), this protein is UvrABC system protein C.